Here is a 588-residue protein sequence, read N- to C-terminus: Peptidoglycan D,D-transpeptidase FtsI (588 aa).

The helical transmembrane segment at 19–39 threads the bilayer; the sequence is FISWRFALLCGCILLALAFLL. Serine 307 serves as the catalytic Acyl-ester intermediate. Positions 578–588 are excised as a propeptide; it reads INQGEGTGGRS.

This sequence belongs to the transpeptidase family. FtsI subfamily.

It localises to the cell inner membrane. It carries out the reaction Preferential cleavage: (Ac)2-L-Lys-D-Ala-|-D-Ala. Also transpeptidation of peptidyl-alanyl moieties that are N-acyl substituents of D-alanine.. It functions in the pathway cell wall biogenesis; peptidoglycan biosynthesis. In terms of biological role, catalyzes cross-linking of the peptidoglycan cell wall at the division septum. This Escherichia coli O157:H7 protein is Peptidoglycan D,D-transpeptidase FtsI.